Consider the following 110-residue polypeptide: Protein RnfH (110 aa).

The disordered stretch occupies residues 86 to 110 (RKRAAQQAKDQEEKKKAEKSANKEN). Over residues 94 to 110 (KDQEEKKKAEKSANKEN) the composition is skewed to basic and acidic residues.

This sequence belongs to the UPF0125 (RnfH) family.

The polypeptide is Protein RnfH (Mannheimia succiniciproducens (strain KCTC 0769BP / MBEL55E)).